A 414-amino-acid polypeptide reads, in one-letter code: Multifunctional CCA protein (414 aa).

The ATP site is built by glycine 8 and arginine 11. Positions 8 and 11 each coordinate CTP. Positions 21 and 23 each coordinate Mg(2+). ATP contacts are provided by arginine 91, arginine 137, and arginine 140. 3 residues coordinate CTP: arginine 91, arginine 137, and arginine 140. An HD domain is found at 228–329; sequence TGIHTLMTLA…LKLFDAVDVW (102 aa).

It belongs to the tRNA nucleotidyltransferase/poly(A) polymerase family. Bacterial CCA-adding enzyme type 1 subfamily. Monomer. Can also form homodimers and oligomers. It depends on Mg(2+) as a cofactor. Ni(2+) is required as a cofactor.

It catalyses the reaction a tRNA precursor + 2 CTP + ATP = a tRNA with a 3' CCA end + 3 diphosphate. It carries out the reaction a tRNA with a 3' CCA end + 2 CTP + ATP = a tRNA with a 3' CCACCA end + 3 diphosphate. In terms of biological role, catalyzes the addition and repair of the essential 3'-terminal CCA sequence in tRNAs without using a nucleic acid template. Adds these three nucleotides in the order of C, C, and A to the tRNA nucleotide-73, using CTP and ATP as substrates and producing inorganic pyrophosphate. tRNA 3'-terminal CCA addition is required both for tRNA processing and repair. Also involved in tRNA surveillance by mediating tandem CCA addition to generate a CCACCA at the 3' terminus of unstable tRNAs. While stable tRNAs receive only 3'-terminal CCA, unstable tRNAs are marked with CCACCA and rapidly degraded. The chain is Multifunctional CCA protein from Serratia proteamaculans (strain 568).